We begin with the raw amino-acid sequence, 357 residues long: Phosphoribosylformylglycinamidine cyclo-ligase (357 aa).

It belongs to the AIR synthase family.

It localises to the cytoplasm. It catalyses the reaction 2-formamido-N(1)-(5-O-phospho-beta-D-ribosyl)acetamidine + ATP = 5-amino-1-(5-phospho-beta-D-ribosyl)imidazole + ADP + phosphate + H(+). It functions in the pathway purine metabolism; IMP biosynthesis via de novo pathway; 5-amino-1-(5-phospho-D-ribosyl)imidazole from N(2)-formyl-N(1)-(5-phospho-D-ribosyl)glycinamide: step 2/2. The protein is Phosphoribosylformylglycinamidine cyclo-ligase of Allorhizobium ampelinum (strain ATCC BAA-846 / DSM 112012 / S4) (Agrobacterium vitis (strain S4)).